The primary structure comprises 163 residues: Putative 4-hydroxy-4-methyl-2-oxoglutarate aldolase (163 aa).

Substrate contacts are provided by residues 76–79 (GDML) and R98. D99 serves as a coordination point for a divalent metal cation.

It belongs to the class II aldolase/RraA-like family. Homotrimer. A divalent metal cation is required as a cofactor.

It carries out the reaction 4-hydroxy-4-methyl-2-oxoglutarate = 2 pyruvate. It catalyses the reaction oxaloacetate + H(+) = pyruvate + CO2. Its function is as follows. Catalyzes the aldol cleavage of 4-hydroxy-4-methyl-2-oxoglutarate (HMG) into 2 molecules of pyruvate. Also contains a secondary oxaloacetate (OAA) decarboxylase activity due to the common pyruvate enolate transition state formed following C-C bond cleavage in the retro-aldol and decarboxylation reactions. The chain is Putative 4-hydroxy-4-methyl-2-oxoglutarate aldolase from Pseudomonas putida (strain ATCC 47054 / DSM 6125 / CFBP 8728 / NCIMB 11950 / KT2440).